The following is a 701-amino-acid chain: F-box/LRR-repeat protein 17 (701 aa).

3 disordered regions span residues 73–93, 227–250, and 279–321; these read SAGL…RDGA, GGGG…CQAP, and VRAG…IPDI. Pro residues predominate over residues 81-90; the sequence is PLSPPPPPPR. Over residues 227–236 the composition is skewed to gly residues; that stretch reads GGGGPAGGGA. A compositionally biased stretch (polar residues) spans 285-294; sequence APSSAQQQPE. Residues 318–365 form the F-box domain; that stretch reads IPDINQLPPSILLKIFSNLSLNERCLSASLVCKYWRDLCLDFQFWKQL.

This sequence belongs to the FBXL17 family. As to quaternary structure, part of the SCF (SKP1-CUL1-F-box) E3 ubiquitin-protein ligase complex SCF(FBXL17) composed of CUL1, SKP1, RBX1 and FBXL17. Interacts with BTB domain-containing proteins such as KLHL12, BCL6 and BACH1; specifically recognizes and binds a conserved degron of non-consecutive residues present at the interface of BTB dimers of aberrant composition. Interacts with SUFU. Interacts with PRMT1.

The protein resides in the cytoplasm. The protein localises to the nucleus. Its function is as follows. Substrate-recognition component of the SCF(FBXL17) E3 ubiquitin ligase complex, a key component of a quality control pathway required to ensure functional dimerization of BTB domain-containing proteins (dimerization quality control, DQC). FBXL17 specifically recognizes and binds a conserved degron of non-consecutive residues present at the interface of BTB dimers of aberrant composition: aberrant BTB dimer are then ubiquitinated by the SCF(FBXL17) complex and degraded by the proteasome. The ability of the SCF(FBXL17) complex to eliminate compromised BTB dimers is required for the differentiation and survival of neural crest and neuronal cells. The SCF(FBXL17) complex mediates ubiquitination and degradation of BACH1. The SCF(FBXL17) complex is also involved in the regulation of the hedgehog/smoothened (Hh) signaling pathway by mediating the ubiquitination and degradation of SUFU, allowing the release of GLI1 from SUFU for proper Hh signal transduction. The SCF(FBXL17) complex mediates ubiquitination and degradation of PRMT1. This Mus musculus (Mouse) protein is F-box/LRR-repeat protein 17.